A 155-amino-acid polypeptide reads, in one-letter code: Mitochondrial import protein 1 (155 aa).

The protein belongs to the MIM1 family.

It localises to the mitochondrion outer membrane. Required for the assembly of the TOM (translocase of outer membrane) receptor complex, which is responsible for the recognition and translocation of cytosolically synthesized mitochondrial preproteins. This chain is Mitochondrial import protein 1, found in Eremothecium gossypii (strain ATCC 10895 / CBS 109.51 / FGSC 9923 / NRRL Y-1056) (Yeast).